A 652-amino-acid polypeptide reads, in one-letter code: WD repeat-containing protein 70 (652 aa).

2 disordered regions span residues 1–22 (MERP…LAVT) and 45–171 (RRTA…IPDS). Residues 45–76 (RRTAVERSRKTLEAREREEEMNREKELRRQNE) show a composition bias toward basic and acidic residues. Residues 92–102 (SKSSSRDTSSS) are compositionally biased toward low complexity. Composition is skewed to acidic residues over residues 103–115 (ESDE…DDEL) and 146–162 (EDVE…EEEE). WD repeat units lie at residues 178 to 217 (HGTK…ASFK), 225 to 266 (CECH…ECIK), 279 to 319 (GHTA…KQKS), 328 to 367 (GKKV…HPKF), 374 to 413 (DPGT…KPLF), 419 to 464 (PTMF…RVYE), and 467 to 506 (ITDA…QRGA). Lys294 participates in a covalent cross-link: Glycyl lysine isopeptide (Lys-Gly) (interchain with G-Cter in SUMO2). Lys450 is modified (N6-acetyllysine). Residues 538 to 563 (REPRQRSTRKQLEKDRLDPLKSHKPE) are compositionally biased toward basic and acidic residues. Residues 538 to 577 (REPRQRSTRKQLEKDRLDPLKSHKPEPPVAGPGRGGRVGT) are disordered. Phosphothreonine is present on Thr577. Glycyl lysine isopeptide (Lys-Gly) (interchain with G-Cter in SUMO2) cross-links involve residues Lys588 and Lys594. Phosphoserine occurs at positions 619 and 636. Positions 629 to 652 (TMFAQVESDDEETKNEPEWKKRKI) are disordered. Residues 642-652 (KNEPEWKKRKI) show a composition bias toward basic and acidic residues.

The protein belongs to the WD repeat GAD-1 family.

This chain is WD repeat-containing protein 70 (WDR70), found in Bos taurus (Bovine).